The sequence spans 355 residues: Mu-like prophage FluMu protein gp47 (355 aa).

It belongs to the Mu gp47/PBSX XkdT family.

This is Mu-like prophage FluMu protein gp47 from Haemophilus influenzae (strain ATCC 51907 / DSM 11121 / KW20 / Rd).